The following is a 119-amino-acid chain: Flagellar transcriptional regulator FlhD (119 aa).

This sequence belongs to the FlhD family. Homodimer; disulfide-linked. Forms a heterohexamer composed of two FlhC and four FlhD subunits. Each FlhC binds a FlhD dimer, forming a heterotrimer, and a hexamer assembles by dimerization of two heterotrimers.

It localises to the cytoplasm. Its function is as follows. Functions in complex with FlhC as a master transcriptional regulator that regulates transcription of several flagellar and non-flagellar operons by binding to their promoter region. Activates expression of class 2 flagellar genes, including fliA, which is a flagellum-specific sigma factor that turns on the class 3 genes. Also regulates genes whose products function in a variety of physiological pathways. The chain is Flagellar transcriptional regulator FlhD from Cronobacter sakazakii (strain ATCC BAA-894) (Enterobacter sakazakii).